The sequence spans 291 residues: 4-hydroxy-tetrahydrodipicolinate synthase (291 aa).

A pyruvate-binding site is contributed by threonine 44. Tyrosine 132 (proton donor/acceptor) is an active-site residue. The Schiff-base intermediate with substrate role is filled by lysine 160. Residue isoleucine 202 participates in pyruvate binding.

The protein belongs to the DapA family. In terms of assembly, homotetramer; dimer of dimers.

It is found in the cytoplasm. It carries out the reaction L-aspartate 4-semialdehyde + pyruvate = (2S,4S)-4-hydroxy-2,3,4,5-tetrahydrodipicolinate + H2O + H(+). The protein operates within amino-acid biosynthesis; L-lysine biosynthesis via DAP pathway; (S)-tetrahydrodipicolinate from L-aspartate: step 3/4. Functionally, catalyzes the condensation of (S)-aspartate-beta-semialdehyde [(S)-ASA] and pyruvate to 4-hydroxy-tetrahydrodipicolinate (HTPA). This is 4-hydroxy-tetrahydrodipicolinate synthase from Rhodospirillum centenum (strain ATCC 51521 / SW).